Reading from the N-terminus, the 930-residue chain is Isoleucine--tRNA ligase (930 aa).

Positions 57–67 (PYANGHLHIGH) match the 'HIGH' region motif. E573 is an L-isoleucyl-5'-AMP binding site. The 'KMSKS' region motif lies at 614-618 (KMSKS). K617 contacts ATP. 4 residues coordinate Zn(2+): C902, C905, C918, and C921.

It belongs to the class-I aminoacyl-tRNA synthetase family. IleS type 1 subfamily. In terms of assembly, monomer. It depends on Zn(2+) as a cofactor.

It localises to the cytoplasm. The enzyme catalyses tRNA(Ile) + L-isoleucine + ATP = L-isoleucyl-tRNA(Ile) + AMP + diphosphate. Its function is as follows. Catalyzes the attachment of isoleucine to tRNA(Ile). As IleRS can inadvertently accommodate and process structurally similar amino acids such as valine, to avoid such errors it has two additional distinct tRNA(Ile)-dependent editing activities. One activity is designated as 'pretransfer' editing and involves the hydrolysis of activated Val-AMP. The other activity is designated 'posttransfer' editing and involves deacylation of mischarged Val-tRNA(Ile). The polypeptide is Isoleucine--tRNA ligase (Helicobacter hepaticus (strain ATCC 51449 / 3B1)).